Consider the following 177-residue polypeptide: ATP synthase subunit delta (177 aa).

Belongs to the ATPase delta chain family. As to quaternary structure, F-type ATPases have 2 components, F(1) - the catalytic core - and F(0) - the membrane proton channel. F(1) has five subunits: alpha(3), beta(3), gamma(1), delta(1), epsilon(1). F(0) has three main subunits: a(1), b(2) and c(10-14). The alpha and beta chains form an alternating ring which encloses part of the gamma chain. F(1) is attached to F(0) by a central stalk formed by the gamma and epsilon chains, while a peripheral stalk is formed by the delta and b chains.

It localises to the cell inner membrane. Functionally, f(1)F(0) ATP synthase produces ATP from ADP in the presence of a proton or sodium gradient. F-type ATPases consist of two structural domains, F(1) containing the extramembraneous catalytic core and F(0) containing the membrane proton channel, linked together by a central stalk and a peripheral stalk. During catalysis, ATP synthesis in the catalytic domain of F(1) is coupled via a rotary mechanism of the central stalk subunits to proton translocation. Its function is as follows. This protein is part of the stalk that links CF(0) to CF(1). It either transmits conformational changes from CF(0) to CF(1) or is implicated in proton conduction. This Shewanella woodyi (strain ATCC 51908 / MS32) protein is ATP synthase subunit delta.